Consider the following 389-residue polypeptide: Sinapine esterase (389 aa).

The N-terminal stretch at Met1–Ser25 is a signal peptide. Ser41 serves as the catalytic Nucleophile. 3 N-linked (GlcNAc...) asparagine glycosylation sites follow: Asn104, Asn137, and Asn320. Active-site residues include Asp345 and His348. N-linked (GlcNAc...) asparagine glycans are attached at residues Asn372 and Asn383.

Belongs to the 'GDSL' lipolytic enzyme family. In terms of tissue distribution, expressed in most tissues or organs of the mature seedlings. Not expressed in roots of mature seedlings.

Its subcellular location is the secreted. The catalysed reaction is O-sinapoylcholine + H2O = (E)-sinapate + choline + H(+). Its activity is regulated as follows. Inhibited by PMSF. Sinapine esterase that catalyzes that hydrolysis of sinapine, releasing choline and sinapate. Sinapine (O-sinapoylcholine) is the predominant phenolic compound in a complex group of sinapate esters in seeds of oilseed rape (B.napus). Sinapine has antinutritive activity and prevents the use of seed protein for food and feed. Shows broad substrate specificity towards various other choline esters, including phosphatidylcholine. The sequence is that of Sinapine esterase from Brassica napus (Rape).